Consider the following 126-residue polypeptide: Aspartate 1-decarboxylase (126 aa).

Residue Ser-25 is the Schiff-base intermediate with substrate; via pyruvic acid of the active site. At Ser-25 the chain carries Pyruvic acid (Ser). Residue Thr-57 coordinates substrate. Residue Tyr-58 is the Proton donor of the active site. 73–75 (GAA) is a binding site for substrate.

It belongs to the PanD family. In terms of assembly, heterooctamer of four alpha and four beta subunits. Pyruvate serves as cofactor. Post-translationally, is synthesized initially as an inactive proenzyme, which is activated by self-cleavage at a specific serine bond to produce a beta-subunit with a hydroxyl group at its C-terminus and an alpha-subunit with a pyruvoyl group at its N-terminus.

It localises to the cytoplasm. It catalyses the reaction L-aspartate + H(+) = beta-alanine + CO2. Its pathway is cofactor biosynthesis; (R)-pantothenate biosynthesis; beta-alanine from L-aspartate: step 1/1. In terms of biological role, catalyzes the pyruvoyl-dependent decarboxylation of aspartate to produce beta-alanine. This chain is Aspartate 1-decarboxylase, found in Salmonella dublin (strain CT_02021853).